Reading from the N-terminus, the 343-residue chain is Small ribosomal subunit biogenesis GTPase RsgA (343 aa).

The tract at residues 1–32 (MAKRRLSKRQVDRIRERQSQRLDTSVAAPDGK) is disordered. The span at 9–20 (RQVDRIRERQSQ) shows a compositional bias: basic and acidic residues. One can recognise a CP-type G domain in the interval 109–273 (YGKLKPVAAN…CIDSPGIREF (165 aa)). GTP contacts are provided by residues 156–159 (NKLD) and 215–223 (GQSGVGKSS). Positions 297, 302, 304, and 310 each coordinate Zn(2+).

This sequence belongs to the TRAFAC class YlqF/YawG GTPase family. RsgA subfamily. In terms of assembly, monomer. Associates with 30S ribosomal subunit, binds 16S rRNA. Zn(2+) is required as a cofactor.

The protein localises to the cytoplasm. Functionally, one of several proteins that assist in the late maturation steps of the functional core of the 30S ribosomal subunit. Helps release RbfA from mature subunits. May play a role in the assembly of ribosomal proteins into the subunit. Circularly permuted GTPase that catalyzes slow GTP hydrolysis, GTPase activity is stimulated by the 30S ribosomal subunit. The polypeptide is Small ribosomal subunit biogenesis GTPase RsgA (Saccharophagus degradans (strain 2-40 / ATCC 43961 / DSM 17024)).